We begin with the raw amino-acid sequence, 2203 residues long: Voltage-dependent L-type calcium channel subunit alpha-1D (2203 aa).

Disordered stretches follow at residues 1-51 and 64-100; these read MMMM…QTVL and KAAQ…SSNS. Residues 1–126 lie on the Cytoplasmic side of the membrane; it reads MMMMMMMKKM…RACISIVDWK (126 aa). A compositionally biased stretch (polar residues) spans 38 to 51; the sequence is GPTSQPNSSKQTVL. The segment covering 82–93 has biased composition (basic residues); sequence QRKRQQYAKSKK. The I repeat unit spans residues 112–408; sequence NNPIRRACIS…NLVLGVLSGE (297 aa). A helical membrane pass occupies residues 127–145; it reads PFDIFILLAIFANCVALAI. Over 146–163 the chain is Extracellular; the sequence is YIPFPEDDSNSTNHNLEK. Residue Asn155 is glycosylated (N-linked (GlcNAc...) asparagine). Residues 164–183 traverse the membrane as a helical segment; that stretch reads VEYAFLIIFTVETFLKIIAS. The Cytoplasmic segment spans residues 184–195; the sequence is GLLLHPNASVRN. A helical transmembrane segment spans residues 196–214; the sequence is GWNLLDFVIVIVGLFSVIL. The Extracellular segment spans residues 215–235; that stretch reads EQLTKETEGGNHSSGKSGGFD. N-linked (GlcNAc...) asparagine glycosylation occurs at Asn225. Residues 236 to 254 form a helical membrane-spanning segment; the sequence is VKALRAFRVLRPLRLVSGV. Topologically, residues 255–273 are cytoplasmic; sequence PSLQVVLNSIIKAMVPLLH. The chain crosses the membrane as a helical span at residues 274-293; it reads IALLVLFVIIIYAIIGLELF. Residues 294 to 381 are Extracellular-facing; sequence IGKMHKTCFF…WVNDAIGWEW (88 aa). N-linked (GlcNAc...) asparagine glycosylation occurs at Asn329. Glu364 lines the Ca(2+) pocket. A helical membrane pass occupies residues 382–406; it reads PWVYFVSLIILGSFFVLNLVLGVLS. Topologically, residues 407–582 are cytoplasmic; it reads GEFSKEREKA…RRCRAAVKSV (176 aa). The tract at residues 429 to 446 is binding to the beta subunit; it reads QQLEEDLKGYLDWITQAE. The interval 449 to 480 is disordered; that stretch reads DPENEEEGGEEGKRNTSMPTSETESVNTENVS. Positions 463-479 are enriched in polar residues; that stretch reads NTSMPTSETESVNTENV. One copy of the II repeat lies at 528–774; it reads EALCVCRCSL…DWNAVMYDGI (247 aa). The chain crosses the membrane as a helical span at residues 583-602; that stretch reads TFYWLVIVLVFLNTLTISSE. The Extracellular segment spans residues 603 to 617; it reads HYNQPDWLTQIQDIA. Residues 618 to 636 form a helical membrane-spanning segment; the sequence is NKVLLALFTCEMLVKMYSL. The Cytoplasmic portion of the chain corresponds to 637–644; the sequence is GLQAYFVS. A helical transmembrane segment spans residues 645–663; it reads LFNRFDCFVVCGGITETIL. The Extracellular segment spans residues 664–673; sequence VELELMSPLG. The chain crosses the membrane as a helical span at residues 674 to 692; sequence VSVFRCVRLLRIFKVTRHW. The Cytoplasmic segment spans residues 693–711; sequence TSLSNLVASLLNSMKSIAS. A helical transmembrane segment spans residues 712-732; the sequence is LLLLLFLFIIIFSLLGMQLFG. The Extracellular segment spans residues 733 to 786; it reads GKFNFDETQTKRSTFDNFPQALLTVFQILTGEDWNAVMYDGIMAYGGPSSSGMI. Glu764 provides a ligand contact to Ca(2+). Residues 787–811 form a helical membrane-spanning segment; that stretch reads VCIYFIILFICGNYILLKLFLAIAV. Residues 812–945 lie on the Cytoplasmic side of the membrane; that stretch reads DNLADAESLN…VGCHKLINHH (134 aa). A disordered region spans residues 822-909; it reads TAQKEEAEEK…AGPRPRRISE (88 aa). Basic and acidic residues predominate over residues 824–849; the sequence is QKEEAEEKERKKIARKESLENKKNNK. Over residues 850-861 the composition is skewed to polar residues; that stretch reads PEVNQIANSDNK. Positions 884 to 897 are enriched in acidic residues; that stretch reads VGEEEEEEEEDEPE. An III repeat occupies 892–1174; it reads EEDEPEVPAG…LLYKAIDSNG (283 aa). Residues 946–964 form a helical membrane-spanning segment; that stretch reads IFTNLILVFIMLSSAALAA. The Extracellular portion of the chain corresponds to 965-980; sequence EDPIRSHSFRNTILGY. Residues 981–1000 form a helical membrane-spanning segment; sequence FDYAFTAIFTVEILLKMTTF. Residues 1001-1012 lie on the Cytoplasmic side of the membrane; it reads GAFLHKGAFCRN. The chain crosses the membrane as a helical span at residues 1013–1031; sequence YFNLLDMLVVGVSLVSFGI. Residues 1032–1037 lie on the Extracellular side of the membrane; sequence QSSAIS. Residues 1038–1057 traverse the membrane as a helical segment; sequence VVKILRVLRVLRPLRAINRA. Residues 1058 to 1076 lie on the Cytoplasmic side of the membrane; the sequence is KGLKHVVQCVFVAIRTIGN. The helical transmembrane segment at 1077 to 1096 threads the bilayer; it reads IMIVTTLLQFMFACIGVQLF. The Extracellular portion of the chain corresponds to 1097–1186; the sequence is KGKFYRCTDE…VGPVYNYRVE (90 aa). A dihydropyridine binding region spans residues 1134–1224; that stretch reads RIWQNSDFNF…QEQGEKEYKN (91 aa). Glu1160 contributes to the Ca(2+) binding site. Residues 1187–1207 traverse the membrane as a helical segment; the sequence is ISIFFIIYIIIVAFFMMNIFV. Residues 1208-1264 lie on the Cytoplasmic side of the membrane; sequence GFVIVTFQEQGEKEYKNCELDKNQRQCVEYALKARPLRRYIPKNPYQYKFWYVVNSS. The IV repeat unit spans residues 1211–1486; the sequence is IVTFQEQGEK…YTCGSNFAIV (276 aa). Residues 1265 to 1283 traverse the membrane as a helical segment; the sequence is PFEYMMFVLIMLNTLCLAM. Residues 1284 to 1298 are Extracellular-facing; that stretch reads QHYEQSKMFNDAMDI. A helical membrane pass occupies residues 1299 to 1318; that stretch reads LNMVFTGVFTVEMVLKVIAF. At 1319-1325 the chain is on the cytoplasmic side; sequence KPKGYFS. A helical membrane pass occupies residues 1326-1347; sequence DAWNTFDSLIVIGSIIDVALSE. Topologically, residues 1348-1357 are extracellular; it reads ADNSEESNRI. Residues 1358–1377 traverse the membrane as a helical segment; sequence SITFFRLFRVMRLVKLLSRG. At 1378 to 1396 the chain is on the cytoplasmic side; sequence EGIRTLLWTFIKSFQALPY. The helical transmembrane segment at 1397–1416 threads the bilayer; sequence VALLIAMLFFIYAVIGMQMF. Topologically, residues 1417–1483 are extracellular; it reads GKVAMRDNNQ…GEEYTCGSNF (67 aa). A dihydropyridine binding region spans residues 1464 to 1530; sequence LCDPDSDYNP…LGPHHLDEFK (67 aa). A phenylalkylamine binding region spans residues 1476 to 1519; it reads EYTCGSNFAIVYFISFYMLCAFLIINLFVAVIMDNFDYLTRDWS. A helical transmembrane segment spans residues 1484-1508; it reads AIVYFISFYMLCAFLIINLFVAVIM. Residues 1509–2203 lie on the Cytoplasmic side of the membrane; that stretch reads DNFDYLTRDW…ADEMICITTL (695 aa). Disordered stretches follow at residues 1734-1766, 1795-1816, 1920-1963, and 2176-2195; these read NHVN…PASD, TSTN…KRPS, FERP…HRRS, and GPGY…DLAD. Residues 1795–1806 show a composition bias toward polar residues; the sequence is TSTNANLNNANM. Residues 2180 to 2195 are compositionally biased toward acidic residues; the sequence is SDEEPDPGREEEDLAD.

This sequence belongs to the calcium channel alpha-1 subunit (TC 1.A.1.11) family. CACNA1D subfamily. As to quaternary structure, voltage-dependent calcium channels are multisubunit complexes, consisting of alpha-1, alpha-2, beta and delta subunits in a 1:1:1:1 ratio. The channel activity is directed by the pore-forming and voltage-sensitive alpha-1 subunit. In many cases, this subunit is sufficient to generate voltage-sensitive calcium channel activity. The auxiliary subunits beta and alpha-2/delta linked by a disulfide bridge regulate the channel activity. Interacts with CABP1 and CABP4, resulting in a near elimination of calcium-dependent inactivation of the channel. Interacts with RIMBP2. As to expression, expressed in brain, pancreatic islets and B-lymphocytes.

Its subcellular location is the membrane. It catalyses the reaction Ca(2+)(in) = Ca(2+)(out). Functionally, voltage-sensitive calcium channels (VSCC) mediate the entry of calcium ions into excitable cells and are also involved in a variety of calcium-dependent processes, including muscle contraction, hormone or neurotransmitter release, gene expression, cell motility, cell division and cell death. The isoform alpha-1D gives rise to L-type calcium currents. Long-lasting (L-type) calcium channels belong to the 'high-voltage activated' (HVA) group. They are blocked by dihydropyridines (DHP), phenylalkylamines, and by benzothiazepines. In terms of biological role, voltage-sensitive calcium channels (VSCC) mediate the entry of calcium ions into excitable cells and are also involved in a variety of calcium-dependent processes, including muscle contraction, hormone or neurotransmitter release, gene expression, cell motility, cell division and cell death. The isoform alpha-1D gives rise to L-type calcium currents. This Rattus norvegicus (Rat) protein is Voltage-dependent L-type calcium channel subunit alpha-1D (Cacna1d).